Here is a 1166-residue protein sequence, read N- to C-terminus: Calcium-activated potassium channel subunit alpha-1 (1166 aa).

Residues 1 to 15 (MANGGGGGGGGGGGS) show a composition bias toward gly residues. 2 disordered regions span residues 1-20 (MANG…LRMS) and 30-51 (LDAS…SVHE). Residues 1–74 (MANGGGGGGG…VPCDSRGQRM (74 aa)) are Extracellular-facing. Over residues 33 to 48 (SSSSSSSSSSSSSSSS) the composition is skewed to low complexity. The chain crosses the membrane as a helical span at residues 75–95 (WWAFLASSMVTFFGGLFIILL). Over 96–166 (WRTLKYLWTV…MISAQTLTGR (71 aa)) the chain is Cytoplasmic. Residues cysteine 106, cysteine 107, and cysteine 109 are each lipidated (S-palmitoyl cysteine). Threonine 139 carries the phosphothreonine; by CamK2 modification. Residues 167–187 (VLVVLVFALSIGALVIYFIDS) traverse the membrane as a helical segment. Over 188–202 (SNPIESCQNFYKDFT) the chain is Extracellular. The helical transmembrane segment at 203–223 (LQIDMAFNVFFLLYFGLRFIA) threads the bilayer. The Cytoplasmic segment spans residues 224 to 227 (ANDK). The chain crosses the membrane as a helical span at residues 228 to 248 (LWFWLEVNSVVDFFTVPPVFV). The Extracellular portion of the chain corresponds to 249-252 (SVYL). The helical; Voltage-sensor transmembrane segment at 253–273 (NRSWLGLRFLRALRLIQFSEI) threads the bilayer. Over 274-288 (LQFLNILKTSNSIKL) the chain is Cytoplasmic. Residues 289–309 (VNLLSIFISTWLTAAGFIHLV) traverse the membrane as a helical segment. Topologically, residues 310 to 323 (ENSGDPWENFQNNQ) are extracellular. The segment at residues 324-346 (ALTYWECVYLLMVTMSTVGYGDV) is an intramembrane region (pore-forming). The short motif at 340 to 343 (TVGY) is the Selectivity for potassium element. The Extracellular portion of the chain corresponds to 347–355 (YAKTTLGRL). A helical transmembrane segment spans residues 356 to 376 (FMVFFILGGLAMFASYVPEII). The Cytoplasmic segment spans residues 377 to 1166 (ELIGNRKKYG…KQKYVQEERL (790 aa)). The RCK N-terminal 1 domain maps to 395 to 537 (RKHIVVCGHI…WNWKEGDDAI (143 aa)). Mg(2+) contacts are provided by glutamate 427, glutamine 450, and glutamate 452. A segment S7 region spans residues 544-564 (LGFIAQSCLAQGLSTMLANLF). Residues 601-621 (LSFPTVCELCFVKLKLLMIAI) are segment S8. The interval 665-669 (CKACH) is heme-binding motif. The segment at 689-717 (EQPSTLSPKKKQRNGGMRNSPSSSPKLMR) is disordered. Threonine 693 is subject to Phosphothreonine. Serine 695, serine 708, and serine 712 each carry phosphoserine. The segment S9 stretch occupies residues 767–787 (VLSGHVVVCIFGDVSSALIGL). The 145-residue stretch at 769-913 (SGHVVVCIFG…MDRSSPDNSP (145 aa)) folds into the RCK N-terminal 2 domain. Threonine 900 carries the phosphothreonine modification. Residues serine 908 and serine 912 each carry the phosphoserine modification. Positions 933–955 (TELVNDTNVQFLDQDDDDDPDTE) match the Calcium bowl motif. Ca(2+)-binding residues include glutamine 942, aspartate 945, aspartate 948, and aspartate 950. Residues 962–982 (FACGTAFAVSVLDSLMSATYF) form a segment S10 region. The span at 1116–1141 (RASLSHSSHSSQSSSKKSSSVHSIPS) shows a compositional bias: low complexity. The disordered stretch occupies residues 1116–1166 (RASLSHSSHSSQSSSKKSSSVHSIPSTANRQNRPKSRESRDKQKYVQEERL). The segment covering 1150–1166 (KSRESRDKQKYVQEERL) has biased composition (basic and acidic residues). A phosphoserine; by PKG mark is found at serine 1151 and serine 1154.

The protein belongs to the potassium channel family. Calcium-activated (TC 1.A.1.3) subfamily. KCa1.1/KCNMA1 sub-subfamily. In terms of assembly, homotetramer; which constitutes the calcium-activated potassium channel. Interacts with beta subunits KCNMB1, KCNMB2, KCNMB3 and KCNMB4. Interacts with gamma subunits LRRC26, LRRC38, LRRC52 and LRRC55. Beta and gamma subunits are accessory, and modulate its activity. Interacts with RAB11B. In terms of processing, phosphorylated. Stimulated by PKG, but not by PKA. In smooth muscles, phosphorylation affects its activity. Phosphorylated. Exclusively stimulated by PKA. In smooth muscles, phosphorylation affects its activity. Post-translationally, incremental phosphorylation of Thr-139 of the KCNMA1 tetramer changes the response to ethanol from increased activation to inhibition of channel activity. In terms of processing, palmitoylation by ZDHHC22 and ZDHHC23 within the intracellular linker between the S0 and S1 transmembrane domains regulates localization to the plasma membrane. Depalmitoylated by LYPLA1 and LYPLAL1, leading to retard exit from the trans-Golgi network.

Its subcellular location is the cell membrane. It carries out the reaction K(+)(in) = K(+)(out). With respect to regulation, ethanol and carbon monoxide-bound heme increase channel activation. Heme inhibits channel activation. Phosphorylation of Thr-139 leads to inhibition of channel activity by ethanol. In terms of biological role, potassium channel activated by both membrane depolarization or increase in cytosolic Ca(2+) that mediates export of K(+). It is also activated by concentration of cytosolic Mg(2+). Its activation dampens the excitatory events that elevate the cytosolic Ca(2+) concentration and/or depolarize the cell membrane. It therefore contributes to repolarization of the membrane potential. Plays a key role in controlling excitability in a number of systems, such as regulation of the contraction of smooth muscle, the tuning of hair cells in the cochlea, regulation of transmitter release, and innate immunity. In smooth muscles, its activation by high level of Ca(2+), caused by ryanodine receptors in the sarcoplasmic reticulum, regulates the membrane potential. In cochlea cells, its number and kinetic properties partly determine the characteristic frequency of each hair cell and thereby helps to establish a tonotopic map. Kinetics of KCNMA1 channels are determined by alternative splicing, phosphorylation status and its combination with modulating beta subunits. Highly sensitive to both iberiotoxin (IbTx) and charybdotoxin (CTX). The chain is Calcium-activated potassium channel subunit alpha-1 (KCNMA1) from Bos taurus (Bovine).